Reading from the N-terminus, the 75-residue chain is Small ribosomal subunit protein bS16 (75 aa).

The protein belongs to the bacterial ribosomal protein bS16 family.

The chain is Small ribosomal subunit protein bS16 from Campylobacter hominis (strain ATCC BAA-381 / DSM 21671 / CCUG 45161 / LMG 19568 / NCTC 13146 / CH001A).